Consider the following 247-residue polypeptide: Large ribosomal subunit protein uL30z (247 aa).

The protein belongs to the universal ribosomal protein uL30 family.

In Arabidopsis thaliana (Mouse-ear cress), this protein is Large ribosomal subunit protein uL30z (RPL7A).